We begin with the raw amino-acid sequence, 22 residues long: Probable ATP-dependent Clp protease proteolytic subunit (22 aa).

This sequence belongs to the peptidase S14 family. In terms of assembly, component of the chloroplastic Clp protease core complex.

The enzyme catalyses Hydrolysis of proteins to small peptides in the presence of ATP and magnesium. alpha-casein is the usual test substrate. In the absence of ATP, only oligopeptides shorter than five residues are hydrolyzed (such as succinyl-Leu-Tyr-|-NHMec, and Leu-Tyr-Leu-|-Tyr-Trp, in which cleavage of the -Tyr-|-Leu- and -Tyr-|-Trp bonds also occurs).. In terms of biological role, cleaves peptides in various proteins in a process that requires ATP hydrolysis. Has a chymotrypsin-like activity. Plays a major role in the degradation of misfolded proteins. This is Probable ATP-dependent Clp protease proteolytic subunit from Populus euphratica (Euphrates poplar).